A 407-amino-acid polypeptide reads, in one-letter code: Methylthioribose kinase (407 aa).

Residues asparagine 40, lysine 57, and 111–113 (EDL) contribute to the ATP site. Aspartate 229 is a binding site for substrate. 246–248 (DAE) provides a ligand contact to ATP. Position 344 (arginine 344) interacts with substrate.

It belongs to the methylthioribose kinase family. In terms of assembly, homodimer.

The enzyme catalyses 5-(methylsulfanyl)-D-ribose + ATP = 5-(methylsulfanyl)-alpha-D-ribose 1-phosphate + ADP + H(+). The protein operates within amino-acid biosynthesis; L-methionine biosynthesis via salvage pathway; S-methyl-5-thio-alpha-D-ribose 1-phosphate from S-methyl-5'-thioadenosine (hydrolase route): step 2/2. Functionally, catalyzes the phosphorylation of methylthioribose into methylthioribose-1-phosphate. The sequence is that of Methylthioribose kinase from Yersinia pseudotuberculosis serotype O:1b (strain IP 31758).